The primary structure comprises 312 residues: Mycothiol acetyltransferase (312 aa).

N-acetyltransferase domains follow at residues 8–136 (PIIR…LPMP) and 149–301 (LRLD…HQDH). Position 38 (glutamate 38) interacts with 1D-myo-inositol 2-(L-cysteinylamino)-2-deoxy-alpha-D-glucopyranoside. Residues 77–79 (LMV) and 85–90 (RQGIAT) each bind acetyl-CoA. 1D-myo-inositol 2-(L-cysteinylamino)-2-deoxy-alpha-D-glucopyranoside is bound by residues glutamate 175, lysine 215, and glutamate 226. Acetyl-CoA is bound by residues 230 to 232 (LGV) and 237 to 243 (EGKGVGR). Tyrosine 264 provides a ligand contact to 1D-myo-inositol 2-(L-cysteinylamino)-2-deoxy-alpha-D-glucopyranoside. 269-274 (NERVVH) lines the acetyl-CoA pocket. The tract at residues 292 to 312 (PAKPARHQDHGRQSSPQERDA) is disordered. Residues 297–312 (RHQDHGRQSSPQERDA) show a composition bias toward basic and acidic residues.

The protein belongs to the acetyltransferase family. MshD subfamily. Monomer.

The catalysed reaction is 1D-myo-inositol 2-(L-cysteinylamino)-2-deoxy-alpha-D-glucopyranoside + acetyl-CoA = mycothiol + CoA + H(+). Functionally, catalyzes the transfer of acetyl from acetyl-CoA to desacetylmycothiol (Cys-GlcN-Ins) to form mycothiol. The protein is Mycothiol acetyltransferase of Propionibacterium freudenreichii subsp. shermanii (strain ATCC 9614 / DSM 4902 / CIP 103027 / NCIMB 8099 / CIRM-BIA1).